Reading from the N-terminus, the 126-residue chain is Lymphocyte antigen 6E (126 aa).

The N-terminal stretch at 1–20 (MKAFLFAVLAAVLCVERAHT) is a signal peptide. One can recognise a UPAR/Ly6 domain in the interval 21 to 98 (LICFSCSDAS…CCDSFLCNIS (78 aa)). Cystine bridges form between Cys-23/Cys-48, Cys-26/Cys-35, Cys-41/Cys-69, Cys-73/Cys-89, and Cys-90/Cys-95. The N-linked (GlcNAc...) asparagine glycan is linked to Asn-96. Ser-98 carries the GPI-anchor amidated serine lipid modification. The propeptide at 99–126 (GSSSVKASYAVLALGILVSFVYVLRARE) is removed in mature form.

In terms of tissue distribution, expressed by thymic blast cells.

Its subcellular location is the cell membrane. The polypeptide is Lymphocyte antigen 6E (LY6E) (Gallus gallus (Chicken)).